Reading from the N-terminus, the 1085-residue chain is Tudor domain-containing protein 7B (1085 aa).

In terms of domain architecture, HTH OST-type 1 spans 3–76 (DEELVKKMVR…SGEVMCHATT (74 aa)). 3 disordered regions span residues 112 to 183 (APLV…PEKR), 200 to 228 (RNPQ…SAPY), and 297 to 341 (PAKE…KALS). The segment covering 203–216 (QHINVPSNLNENTT) has biased composition (polar residues). The HTH OST-type 2 domain occupies 229–299 (SPKLVQSRLQ…PQELLLYPAK (71 aa)). Positions 322–335 (TQRPSLTAKSNTPE) are enriched in polar residues. The HTH OST-type 3 domain occupies 340–410 (LSPDLKQKLG…PKRAILYAKV (71 aa)). Tudor domains lie at 496 to 554 (SPSP…FYRL) and 686 to 743 (RPFC…LLRD). Residues 843-853 (NVPTATQTSSL) are compositionally biased toward polar residues. The segment at 843-888 (NVPTATQTSSLKTDRGDKALHTPKKTSPPLGSKSTPAGSPPERLSL) is disordered.

Its subcellular location is the cytoplasm. Component of specific cytoplasmic RNA granules involved in post-transcriptional regulation of specific genes: probably acts by binding to specific mRNAs and regulating their translation. Probably required during spermatogenesis. The sequence is that of Tudor domain-containing protein 7B (tdrd7b) from Danio rerio (Zebrafish).